A 500-amino-acid polypeptide reads, in one-letter code: L-arabinose isomerase (500 aa).

Glu306, Glu333, His350, and His450 together coordinate Mn(2+).

Belongs to the arabinose isomerase family. Homohexamer. Mn(2+) serves as cofactor.

It carries out the reaction beta-L-arabinopyranose = L-ribulose. The protein operates within carbohydrate degradation; L-arabinose degradation via L-ribulose; D-xylulose 5-phosphate from L-arabinose (bacterial route): step 1/3. Its function is as follows. Catalyzes the conversion of L-arabinose to L-ribulose. The sequence is that of L-arabinose isomerase from Yersinia pestis (strain Pestoides F).